A 465-amino-acid polypeptide reads, in one-letter code: tRNA-2-methylthio-N(6)-dimethylallyladenosine synthase (465 aa).

In terms of domain architecture, MTTase N-terminal spans methionine 26–arginine 141. [4Fe-4S] cluster is bound by residues cysteine 35, cysteine 71, cysteine 104, cysteine 173, cysteine 177, and cysteine 180. The Radical SAM core domain maps to proline 159–arginine 388. Residues leucine 391–glycine 453 enclose the TRAM domain.

It belongs to the methylthiotransferase family. MiaB subfamily. Monomer. The cofactor is [4Fe-4S] cluster.

It localises to the cytoplasm. The catalysed reaction is N(6)-dimethylallyladenosine(37) in tRNA + (sulfur carrier)-SH + AH2 + 2 S-adenosyl-L-methionine = 2-methylsulfanyl-N(6)-dimethylallyladenosine(37) in tRNA + (sulfur carrier)-H + 5'-deoxyadenosine + L-methionine + A + S-adenosyl-L-homocysteine + 2 H(+). Catalyzes the methylthiolation of N6-(dimethylallyl)adenosine (i(6)A), leading to the formation of 2-methylthio-N6-(dimethylallyl)adenosine (ms(2)i(6)A) at position 37 in tRNAs that read codons beginning with uridine. This Thermus thermophilus (strain ATCC BAA-163 / DSM 7039 / HB27) protein is tRNA-2-methylthio-N(6)-dimethylallyladenosine synthase.